A 438-amino-acid polypeptide reads, in one-letter code: Serine hydroxymethyltransferase (438 aa).

(6S)-5,6,7,8-tetrahydrofolate is bound at residue 133-135; the sequence is GHI. Lys-239 carries the N6-(pyridoxal phosphate)lysine modification.

Belongs to the SHMT family. Homodimer. Pyridoxal 5'-phosphate serves as cofactor.

It localises to the cytoplasm. It carries out the reaction 5,10-methylenetetrahydromethanopterin + glycine + H2O = 5,6,7,8-tetrahydromethanopterin + L-serine. It functions in the pathway amino-acid biosynthesis; glycine biosynthesis; glycine from L-serine: step 1/1. Its function is as follows. Catalyzes the reversible interconversion of serine and glycine with tetrahydromethanopterin (H4MPT) serving as the one-carbon carrier. Also exhibits a pteridine-independent aldolase activity toward beta-hydroxyamino acids, producing glycine and aldehydes, via a retro-aldol mechanism. This chain is Serine hydroxymethyltransferase, found in Archaeoglobus fulgidus (strain ATCC 49558 / DSM 4304 / JCM 9628 / NBRC 100126 / VC-16).